A 416-amino-acid polypeptide reads, in one-letter code: Cysteate synthase (416 aa).

Residue lysine 104 is modified to N6-(pyridoxal phosphate)lysine. Position 130 (asparagine 130) interacts with pyridoxal 5'-phosphate.

Belongs to the threonine synthase family. Cysteate synthase subfamily. In terms of assembly, homotrimer. Pyridoxal 5'-phosphate is required as a cofactor.

It catalyses the reaction O-phospho-L-serine + sulfite + H(+) = L-cysteate + phosphate. The protein operates within cofactor biosynthesis; coenzyme M biosynthesis. Specifically catalyzes the beta-elimination of phosphate from L-phosphoserine and the beta-addition of sulfite to the dehydroalanine intermediate to produce L-cysteate. The chain is Cysteate synthase from Methanosarcina barkeri (strain Fusaro / DSM 804).